The primary structure comprises 510 residues: Flavonoid 3',5'-hydroxylase (510 aa).

Cys-447 contributes to the heme binding site.

This sequence belongs to the cytochrome P450 family. Requires heme as cofactor.

The catalysed reaction is a 3',5'-unsubstituted flavanone + 2 reduced [NADPH--hemoprotein reductase] + 2 O2 = a 3',5'-dihydroxyflavanone + 2 oxidized [NADPH--hemoprotein reductase] + 2 H2O + 2 H(+). It participates in pigment biosynthesis; anthocyanin biosynthesis. Functionally, catalyzes the 3'5'-hydroxylation of naringenin and eriodictyol to form 5,7,3,'4',5'-pentahydroxyflavanone and 3',5'-hydroxylation of dihydrokaempferol and dihydroquercetin to form dihydromyricetin. This is Flavonoid 3',5'-hydroxylase (CYP75A5) from Eustoma exaltatum subsp. russellianum (Bluebells).